The sequence spans 408 residues: CinA-like protein (408 aa).

The protein belongs to the CinA family.

This Anaeromyxobacter dehalogenans (strain 2CP-C) protein is CinA-like protein.